Here is a 33-residue protein sequence, read N- to C-terminus: AVGGIPTDEEQATGLEEIVMVAAQXGADXYDVM.

This sequence belongs to the cytochrome c oxidase subunit 5B family. Component of the cytochrome c oxidase (complex IV, CIV), a multisubunit enzyme composed of 14 subunits. The complex is composed of a catalytic core of 3 subunits MT-CO1, MT-CO2 and MT-CO3, encoded in the mitochondrial DNA, and 11 supernumerary subunits COX4I, COX5A, COX5B, COX6A, COX6B, COX6C, COX7A, COX7B, COX7C, COX8 and NDUFA4, which are encoded in the nuclear genome. The complex exists as a monomer or a dimer and forms supercomplexes (SCs) in the inner mitochondrial membrane with NADH-ubiquinone oxidoreductase (complex I, CI) and ubiquinol-cytochrome c oxidoreductase (cytochrome b-c1 complex, complex III, CIII), resulting in different assemblies (supercomplex SCI(1)III(2)IV(1) and megacomplex MCI(2)III(2)IV(2)).

It localises to the mitochondrion inner membrane. Its pathway is energy metabolism; oxidative phosphorylation. In terms of biological role, component of the cytochrome c oxidase, the last enzyme in the mitochondrial electron transport chain which drives oxidative phosphorylation. The respiratory chain contains 3 multisubunit complexes succinate dehydrogenase (complex II, CII), ubiquinol-cytochrome c oxidoreductase (cytochrome b-c1 complex, complex III, CIII) and cytochrome c oxidase (complex IV, CIV), that cooperate to transfer electrons derived from NADH and succinate to molecular oxygen, creating an electrochemical gradient over the inner membrane that drives transmembrane transport and the ATP synthase. Cytochrome c oxidase is the component of the respiratory chain that catalyzes the reduction of oxygen to water. Electrons originating from reduced cytochrome c in the intermembrane space (IMS) are transferred via the dinuclear copper A center (CU(A)) of subunit 2 and heme A of subunit 1 to the active site in subunit 1, a binuclear center (BNC) formed by heme A3 and copper B (CU(B)). The BNC reduces molecular oxygen to 2 water molecules using 4 electrons from cytochrome c in the IMS and 4 protons from the mitochondrial matrix. The chain is Cytochrome c oxidase subunit 5B liver, mitochondrial from Oncorhynchus mykiss (Rainbow trout).